Reading from the N-terminus, the 2119-residue chain is Outer kinetochore KNL1 complex subunit KNL1 (2119 aa).

Residues 1–59 form a disordered region; the sequence is MDGVYSEANEENDNTQRPVRRQHSSILKPPRSPLQDLKCGNQTNQEPNPPRKRKSSRRV. Residues 1 to 202 are may mediate oligomerization; that stretch reads MDGVYSEANE…SDNFIKRLKT (202 aa). 2 interaction with microtubules regions span residues 17–34 and 53–80; these read RPVR…RSPL and RKSS…ERNS. Residues 23–80 form an interaction with PP1CA; contains the protein phosphatase 1 (PP1) interaction motifs SILK, RVXF and phi-phi region; it reads HSSILKPPRSPLQDLKCGNQTNQEPNPPRKRKSSRRVSFADTIKVFQTESHMKTERNS. A phosphoserine mark is found at serine 24, serine 32, and serine 60. Positions 124–140 are interaction with BUB1; that stretch reads ENQMDLTASHTVMITKG. Positions 160–179 are interaction with BUB1B; sequence ENLKHHAANSRIKKDLACST. At serine 538 the chain carries Phosphoserine. A phosphothreonine mark is found at threonine 540 and threonine 739. Repeat 1 spans residues 723 to 827; sequence DKTILFSEGN…MTKSHTVFID (105 aa). The tract at residues 723–1027 is 2 X 104 AA approximate repeats; it reads DKTILFSEGN…VTRSHTVFID (305 aa). Phosphoserine occurs at positions 794 and 878. Repeat 2 spans residues 923–1027; it reads KSITFPENDK…VTRSHTVFID (105 aa). Phosphoserine is present on residues serine 1243 and serine 1464. Residues 1557-1583 form a disordered region; that stretch reads SQRESLPSENKTENCRAQKRTRVEEND. A compositionally biased stretch (basic and acidic residues) spans 1566–1583; sequence NKTENCRAQKRTRVEEND. Positions 1577–1590 match the Nuclear localization signal motif; sequence TRVEENDVTNEKKI. Residues serine 1616, serine 1627, and serine 1642 each carry the phosphoserine modification. Residues 1763 to 1890 are required for interaction with ZWINT; it reads KVKDYSDEEL…FLEVETQKTQ (128 aa). Residues 1799-1890 adopt a coiled-coil conformation; it reads VALYNKLVHS…FLEVETQKTQ (92 aa). Positions 1873–2093 are interaction with NSL1, DSN1 and required for assembly into the outer kinetochore; that stretch reads EEEELQRKFL…GKTGHDEIAA (221 aa).

In terms of assembly, component of the KNL1 complex composed of KNL1 and ZWINT. Part of the ten-subunit outer kinetochore KMN network that includes the KNL1, MIS12 and NDC80 complexes; a bioriented kinetochore contains approximately 150 copies of the network. Interacts (via C-terminus) with the MIS12 complex subunits NSL1 (via C-terminus), PMF1 and DSN1; the interaction is direct. Interacts (via N-terminal region) with BUB1B (via BUB1 N-terminal domain); the interaction is direct and is required for cell cycle arrest upon activation of the mitotic spindle assembly checkpoint. Interacts (via N-terminal region) with BUB1 (via BUB1 N-terminal domain); the interaction is direct. Interacts with the protein phosphatase PP1 subunit PPP1CA; the interaction is direct and mutually exclusive with binding to microtubules. Interacts with the protein phosphatase PP1 subunit PPP1CC; the interaction is direct and mutually exclusive with binding to microtubules. Phosphorylation by AURKB negatively regulates its interaction with protein phosphatase 1 (PP1) subunit PPP1CA and with microtubules. As to expression, expressed in oocytes during meiotic progression (at protein level). Expressed during spermatogenesis.

Its subcellular location is the nucleus. It localises to the chromosome. The protein resides in the centromere. It is found in the kinetochore. The protein localises to the cytoplasm. Functionally, acts as a component of the outer kinetochore KNL1 complex that serves as a docking point for spindle assembly checkpoint components and mediates microtubule-kinetochore interactions. Kinetochores, consisting of a centromere-associated inner segment and a microtubule-contacting outer segment, play a crucial role in chromosome segregation by mediating the physical connection between centromeric DNA and spindle microtubules. The outer kinetochore is made up of the ten-subunit KMN network, comprising the MIS12, NDC80 and KNL1 complexes, and auxiliary microtubule-associated components; together they connect the outer kinetochore with the inner kinetochore, bind microtubules, and mediate interactions with mitotic checkpoint proteins that delay anaphase until chromosomes are bioriented on the spindle. Required for kinetochore binding by a distinct subset of kMAPs (kinetochore-bound microtubule-associated proteins) and motors. Acts in coordination with CENPK to recruit the NDC80 complex to the outer kinetochore. Can bind either to microtubules or to the protein phosphatase 1 (PP1) catalytic subunits PPP1CA and PPP1CC (via overlapping binding sites), it has higher affinity for PP1. Recruits MAD2L1 to the kinetochore and also directly links BUB1 and BUB1B to the kinetochore. In addition to orienting mitotic chromosomes, it is also essential for alignment of homologous chromosomes during meiotic metaphase I. In meiosis I, required to activate the spindle assembly checkpoint at unattached kinetochores to correct erroneous kinetochore-microtubule attachments. In Mus musculus (Mouse), this protein is Outer kinetochore KNL1 complex subunit KNL1.